Consider the following 1146-residue polypeptide: TAWTFLKAMQKCSKKREARGSREAPETNFPDTTEESAQQICCTRDSSDSKSVPRSERNKKGIQCQGEGSSRGSQPGQFVGVTYNLEKRPTTIVLINDTPLNVLLDTGADTSVLTTAHYNRLKYRGRKYQGTGIIGVGGNVETFSTPVTIKKKGRHIKTRMLVADIPVTILGRDILQDLGAKLVLAQLSKEIKFRKIELKEGTMGPKIPQWPLTKEKLEGAKEIVQRLLSEGKISEASDNNPYNSPIFVIKKRSGKWRLLQDLRELNKTVQVGTEISRGLPHPGGLIKCKHMTVLDIGDAYFTIPLDPEFRPYTAFTIPSINHQEPDKRYVWNCLPQGFVLSPYIYQKTLQEILQPFRERYPEVQLYQYMDDLFVGSNGSKKQHKELIIELRAILLEKGFETPDDKLQEVPPYSWLGYQLCPENWKVQKMQLDMVKNPTLNDVQKLMGNITWMSSGVPGLTVKHIAATTKGCLELNQKVIWTEEAQKELEENNEKIKNAQGLQYYNPEEEMLCEVEITKNYEATYVIKQSQGILWAGKKIMKANKGWSTVKNLMLLLQHVATESITRVGKCPTFKVPFTKEQVMWEMQKGWYYSWLPEIVYTHQVVHDDWRMKLVEEPTSGITIYTDGGKQNGEGIAAYVTSNGRTKQKRLGPVTHQVAERMAIQMALEDTRDKQVNIVTDSYYCWKNITEGLGLEGPQSPWWPIIQNIREKEIVYFAWVPGHKGICGNQLADEAAKIKEEIMLAYQGTQIKEKRDEDAGFDLCVPYDIMIPVSDTKIIPTDVKIQVPPNSFGWVTGKSSMAKQGLLINGGIIDEGYTGEIQVICTNIGKSNIKLIEGQKFAQLIILQHHSNSRQPWDENKISQRGDKGFGSTGVFWVENIQEAQDEHENWHTSPKILARNYKIPLTVAKQITQECPHCTKQGSGPAGCVMRSPNHWQADCTHLDNKIILTFVESNSGYIHATLLSKENALCTSLAILEWARLFSPKSLHTDNGTNFVAEPVVNLLKFLKIAHTTGIPYHPESQGIVERANRTLKEKIQSHRDNTQTLEAALQLALITCNKGRESMGGQTPWEVFITNQAQVIHEKLLLQQAQSSKKFCFYKIPGEHDWKGPTRVLWKGDGAVVVNDEGKGIIAVPLTRTKLLIKPN.

The tract at residues 13-77 (SKKREARGSR…GSSRGSQPGQ (65 aa)) is disordered. Positions 29–41 (FPDTTEESAQQIC) are enriched in polar residues. Residues 45 to 59 (DSSDSKSVPRSERNK) are compositionally biased toward basic and acidic residues. Residues 66 to 76 (GEGSSRGSQPG) show a composition bias toward polar residues. Residues 100–174 (LNVLLDTGAD…IPVTILGRDI (75 aa)) form the Peptidase A2 domain. Asp-105 is a catalytic residue. Residues 230-419 (EGKISEASDN…PPYSWLGYQL (190 aa)) form the Reverse transcriptase domain. The region spanning 617–740 (PTSGITIYTD…ADEAAKIKEE (124 aa)) is the RNase H type-1 domain. Residues 878 to 919 (ENIQEAQDEHENWHTSPKILARNYKIPLTVAKQITQECPHCT) form an Integrase-type zinc finger. Positions 887, 891, 915, and 918 each coordinate Zn(2+). In terms of domain architecture, Integrase catalytic spans 921–1078 (QGSGPAGCVM…TPWEVFITNQ (158 aa)). Positions 1096–1144 (KFCFYKIPGEHDWKGPTRVLWKGDGAVVVNDEGKGIIAVPLTRTKLLIK) form a DNA-binding region, integrase-type.

Belongs to the retroviral Pol polyprotein family. In terms of processing, specific enzymatic cleavages in vivo yield mature proteins.

The enzyme catalyses Endohydrolysis of RNA in RNA/DNA hybrids. Three different cleavage modes: 1. sequence-specific internal cleavage of RNA. Human immunodeficiency virus type 1 and Moloney murine leukemia virus enzymes prefer to cleave the RNA strand one nucleotide away from the RNA-DNA junction. 2. RNA 5'-end directed cleavage 13-19 nucleotides from the RNA end. 3. DNA 3'-end directed cleavage 15-20 nucleotides away from the primer terminus.. It catalyses the reaction 3'-end directed exonucleolytic cleavage of viral RNA-DNA hybrid.. The catalysed reaction is DNA(n) + a 2'-deoxyribonucleoside 5'-triphosphate = DNA(n+1) + diphosphate. In terms of biological role, during replicative cycle of retroviruses, the reverse-transcribed viral DNA is integrated into the host chromosome by the viral integrase enzyme. RNase H activity is associated with the reverse transcriptase. This is Pol polyprotein (pol) from Equus asinus (Donkey).